A 262-amino-acid chain; its full sequence is Hydroxyacylglutathione hydrolase (262 aa).

Positions 53, 55, 57, 58, 111, 128, and 166 each coordinate Zn(2+).

The protein belongs to the metallo-beta-lactamase superfamily. Glyoxalase II family. In terms of assembly, monomer. The cofactor is Zn(2+).

It carries out the reaction an S-(2-hydroxyacyl)glutathione + H2O = a 2-hydroxy carboxylate + glutathione + H(+). It participates in secondary metabolite metabolism; methylglyoxal degradation; (R)-lactate from methylglyoxal: step 2/2. Thiolesterase that catalyzes the hydrolysis of S-D-lactoyl-glutathione to form glutathione and D-lactic acid. This chain is Hydroxyacylglutathione hydrolase, found in Nitrosomonas europaea (strain ATCC 19718 / CIP 103999 / KCTC 2705 / NBRC 14298).